Here is a 355-residue protein sequence, read N- to C-terminus: Transcription factor TCP13 (355 aa).

The interval 1-57 (MNIVSWKDANDEVAGGATTRREREVKEDQEETEVRATSGKTVIKKQPTSISSSSSSW) is disordered. The region spanning 74 to 132 (GKDRHSKVCTLRGLRDRRVRLSVPTAIQLYDLQERLGVDQPSKAVDWLLDAAKEEIDEL) is the TCP domain. The segment at 329-355 (TNSTTTANMSRHLGSERCTSRGSDHHM) is disordered. Residues 341–355 (LGSERCTSRGSDHHM) show a composition bias toward basic and acidic residues.

As to quaternary structure, interacts with AHL27 and AHL29. Interacts with SPL. Interacts with KIN10; KIN11 and FLZ3. Expressed in cotyledons, particularly in the vascular region, in leaves, buds, flowers and immature siliques, and, to a lower extent, in roots.

It is found in the nucleus. It localises to the plastid. The protein localises to the chloroplast. In terms of biological role, plays a pivotal role in the control of morphogenesis of shoot organs by negatively regulating the expression of boundary-specific genes such as CUC genes, probably through the induction of miRNA (e.g. miR164). Binds to the 3'-ACC-5' repeats in the light-responsive promoter (LRP) of psbD, and activates its transcription. Participates in ovule development. The polypeptide is Transcription factor TCP13 (TCP13) (Arabidopsis thaliana (Mouse-ear cress)).